The sequence spans 28 residues: IPCGESCVWIPCISGMFGCSCKDKVCYS.

3 disulfide bridges follow: Cys3–Cys19, Cys7–Cys21, and Cys12–Cys26. Met16 bears the Methionine sulfoxide; in form chassatide chaC11A mark.

It belongs to the cyclotide family. Bracelet subfamily. As to expression, expressed in fruit, pedicel and stem but not in leaf and root (at protein level).

In terms of biological role, chassatide C11: Probably participates in a plant defense mechanism. Active against E.coli ATCC 25922 (MIC=8.5 uM) but not against S.aureus ATCC 12600 or S.epidermidis ATCC 14990. Has cytotoxic and hemolytic activity. Functionally, chassatide C11A: Probably participates in a plant defense mechanism. Has no activity against bacteria up to a concentration of 80 uM. Has no cytotoxic and no hemolytic activity. The protein is Chassatide C11 of Chassalia chartacea (Chassalia curviflora).